Here is a 640-residue protein sequence, read N- to C-terminus: Phosphatidylinositol-binding clathrin assembly protein (640 aa).

Serine 2 is modified (N-acetylserine). Residues glutamine 14–phenylalanine 145 enclose the ENTH domain. Phosphoserine is present on residues serine 16 and serine 20. Positions lysine 221 to threonine 294 are interaction with PIMREG. Lysine 238 participates in a covalent cross-link: Glycyl lysine isopeptide (Lys-Gly) (interchain with G-Cter in SUMO2). Phosphoserine occurs at positions 303 and 315. The tract at residues asparagine 543–proline 568 is disordered. Polar residues predominate over residues glycine 544–glutamine 554.

The protein belongs to the PICALM/SNAP91 family. In terms of assembly, binds to clathrin; involves primarily the C-terminal sequences, but the full-length protein is required for full binding capacity. Binds phosphatidylinositol 4,5- bisphosphate. Interacts with PIMREG; this interaction may change the subcellular location into the nucleus. Interacts with AP2A1 (via its alpha-appendage domain). Interacts (via N-terminus) with VAMP2; VAMP3; VAMP7 and VAMP8 (Via N-terminus). Interacts with LC3/MAP1LC3A. In terms of tissue distribution, isoform 2 was found in most tissues examined. Isoform 1 has an overlapping expression pattern but is absent from lung, heart and pancreas. Both isoforms are widely expressed in the brain, higher levels are seen in hippocampus, dentate gyrus, medial habenula nucleus and cerebellar granule cells.

It is found in the cell membrane. The protein localises to the membrane. The protein resides in the clathrin-coated pit. Its subcellular location is the golgi apparatus. It localises to the cytoplasmic vesicle. It is found in the clathrin-coated vesicle. The protein localises to the nucleus. Cytoplasmic adapter protein that plays a critical role in clathrin-mediated endocytosis which is important in processes such as internalization of cell receptors, synaptic transmission or removal of apoptotic cells. Recruits AP-2 and attaches clathrin triskelions to the cytoplasmic side of plasma membrane leading to clathrin-coated vesicles (CCVs) assembly. Furthermore, regulates clathrin-coated vesicle size and maturation by directly sensing and driving membrane curvature. In addition to binding to clathrin, mediates the endocytosis of small R-SNARES (Soluble NSF Attachment Protein REceptors) between plasma membranes and endosomes including VAMP2, VAMP3, VAMP4, VAMP7 or VAMP8. In turn, PICALM-dependent SNARE endocytosis is required for the formation and maturation of autophagic precursors. Modulates thereby autophagy and the turnover of autophagy substrates such as MAPT/TAU or amyloid precursor protein cleaved C-terminal fragment (APP-CTF). The protein is Phosphatidylinositol-binding clathrin assembly protein (Picalm) of Rattus norvegicus (Rat).